Consider the following 410-residue polypeptide: Peptidase T (410 aa).

A Zn(2+)-binding site is contributed by His79. Residue Asp81 is part of the active site. Residue Asp142 coordinates Zn(2+). Glu176 acts as the Proton acceptor in catalysis. Zn(2+) contacts are provided by Glu177, Asp199, and His381.

Belongs to the peptidase M20B family. The cofactor is Zn(2+).

The protein resides in the cytoplasm. It catalyses the reaction Release of the N-terminal residue from a tripeptide.. Cleaves the N-terminal amino acid of tripeptides. The chain is Peptidase T from Brevibacillus brevis (strain 47 / JCM 6285 / NBRC 100599).